A 154-amino-acid polypeptide reads, in one-letter code: ATP synthase subunit b (154 aa).

The chain crosses the membrane as a helical span at residues 5 to 27 (LLGQAIAFTLFVWFCMKYVWPPI).

It belongs to the ATPase B chain family. As to quaternary structure, F-type ATPases have 2 components, F(1) - the catalytic core - and F(0) - the membrane proton channel. F(1) has five subunits: alpha(3), beta(3), gamma(1), delta(1), epsilon(1). F(0) has three main subunits: a(1), b(2) and c(10-14). The alpha and beta chains form an alternating ring which encloses part of the gamma chain. F(1) is attached to F(0) by a central stalk formed by the gamma and epsilon chains, while a peripheral stalk is formed by the delta and b chains.

It is found in the cell inner membrane. F(1)F(0) ATP synthase produces ATP from ADP in the presence of a proton or sodium gradient. F-type ATPases consist of two structural domains, F(1) containing the extramembraneous catalytic core and F(0) containing the membrane proton channel, linked together by a central stalk and a peripheral stalk. During catalysis, ATP synthesis in the catalytic domain of F(1) is coupled via a rotary mechanism of the central stalk subunits to proton translocation. In terms of biological role, component of the F(0) channel, it forms part of the peripheral stalk, linking F(1) to F(0). This Aliivibrio fischeri (strain ATCC 700601 / ES114) (Vibrio fischeri) protein is ATP synthase subunit b.